The chain runs to 309 residues: Probable pyridoxal 5'-phosphate synthase subunit PDX1 (309 aa).

D-ribose 5-phosphate is bound at residue Asp40. Lys97 (schiff-base intermediate with D-ribose 5-phosphate) is an active-site residue. Gly169 provides a ligand contact to D-ribose 5-phosphate. Arg181 is a D-glyceraldehyde 3-phosphate binding site. D-ribose 5-phosphate-binding positions include Gly230 and Gly251 to Ser252.

It belongs to the PdxS/SNZ family.

The catalysed reaction is aldehydo-D-ribose 5-phosphate + D-glyceraldehyde 3-phosphate + L-glutamine = pyridoxal 5'-phosphate + L-glutamate + phosphate + 3 H2O + H(+). Its pathway is cofactor biosynthesis; pyridoxal 5'-phosphate biosynthesis. Catalyzes the formation of pyridoxal 5'-phosphate from ribose 5-phosphate (RBP), glyceraldehyde 3-phosphate (G3P) and ammonia. The ammonia is provided by PDX2. Can also use ribulose 5-phosphate and dihydroxyacetone phosphate as substrates, resulting from enzyme-catalyzed isomerization of RBP and G3P, respectively. Also plays an indirect role in resistance to singlet oxygen-generating photosensitizers. In Ginkgo biloba (Ginkgo), this protein is Probable pyridoxal 5'-phosphate synthase subunit PDX1 (PDX1).